Here is a 291-residue protein sequence, read N- to C-terminus: Membrane protein insertase YidC (291 aa).

Positions 1-19 (MKKKALLPLLLGVMVFLAG) are cleaved as a signal peptide. Cys-20 carries N-palmitoyl cysteine lipidation. A lipid anchor (S-diacylglycerol cysteine) is attached at Cys-20. 4 helical membrane passes run 56–76 (YGIAIIVLVLVIRIILLPFML), 134–154 (ALGCLPVLIQMPVVMGLYFVL), 170–190 (WFNLIHPDIWITIIAGVLYFI), and 211–231 (MIVSPIMIIWISLSSASALGL). The disordered stretch occupies residues 266–291 (FKENNSNSNKKGKNTQVVSKNNKKKK).

This sequence belongs to the OXA1/ALB3/YidC family. Type 2 subfamily.

It is found in the cell membrane. Its function is as follows. Required for the insertion and/or proper folding and/or complex formation of integral membrane proteins into the membrane. Involved in integration of membrane proteins that insert both dependently and independently of the Sec translocase complex, as well as at least some lipoproteins. This chain is Membrane protein insertase YidC, found in Staphylococcus haemolyticus (strain JCSC1435).